A 116-amino-acid chain; its full sequence is Small ribosomal subunit protein eS24 (116 aa).

Residues 81–116 (IEPEHMVERHKKVLEELESESEESEESESEESEEEE) are disordered. A compositionally biased stretch (acidic residues) spans 96–116 (ELESESEESEESESEESEEEE).

It belongs to the eukaryotic ribosomal protein eS24 family.

This Methanopyrus kandleri (strain AV19 / DSM 6324 / JCM 9639 / NBRC 100938) protein is Small ribosomal subunit protein eS24.